The primary structure comprises 109 residues: Hainantoxin-XVIII-5 (109 aa).

An N-terminal signal peptide occupies residues 1–18 (MKLSIIIIATSLVIAVVA). The propeptide occupies 19–46 (FPSKDSKAIENDKTEQRMEIVVQETARA). 4 cysteine pairs are disulfide-bonded: cysteine 47-cysteine 62, cysteine 55-cysteine 68, cysteine 59-cysteine 108, and cysteine 61-cysteine 81.

This sequence belongs to the neurotoxin 25 family. F7 subfamily. In terms of tissue distribution, expressed by the venom gland.

The protein resides in the secreted. Functionally, putative ion channel inhibitor. This Cyriopagopus hainanus (Chinese bird spider) protein is Hainantoxin-XVIII-5.